We begin with the raw amino-acid sequence, 407 residues long: Peptidase T (407 aa).

Histidine 82 serves as a coordination point for Zn(2+). Aspartate 84 is a catalytic residue. A Zn(2+)-binding site is contributed by aspartate 143. Glutamate 177 serves as the catalytic Proton acceptor. Zn(2+)-binding residues include glutamate 178, aspartate 200, and histidine 382.

Belongs to the peptidase M20B family. Requires Zn(2+) as cofactor.

The protein resides in the cytoplasm. It carries out the reaction Release of the N-terminal residue from a tripeptide.. Its function is as follows. Cleaves the N-terminal amino acid of tripeptides. This chain is Peptidase T, found in Streptococcus pyogenes serotype M4 (strain MGAS10750).